Here is a 280-residue protein sequence, read N- to C-terminus: Eukaryotic translation initiation factor 3 subunit F-1 (280 aa).

The MPN domain occupies 8 to 138; it reads VRVHPVVLFQ…LRAYVCIQLG (131 aa).

Belongs to the eIF-3 subunit F family. In terms of assembly, component of the eukaryotic translation initiation factor 3 (eIF-3) complex. The eIF-3 complex interacts with pix.

Its subcellular location is the cytoplasm. Its function is as follows. Component of the eukaryotic translation initiation factor 3 (eIF-3) complex, which is involved in protein synthesis of a specialized repertoire of mRNAs and, together with other initiation factors, stimulates binding of mRNA and methionyl-tRNAi to the 40S ribosome. The eIF-3 complex specifically targets and initiates translation of a subset of mRNAs involved in cell proliferation. The protein is Eukaryotic translation initiation factor 3 subunit F-1 of Drosophila erecta (Fruit fly).